The following is a 55-amino-acid chain: Small ribosomal subunit protein eS31 (55 aa).

Residues cysteine 27, cysteine 30, cysteine 45, and cysteine 48 each coordinate Zn(2+). Residues 27 to 48 form a C4-type zinc finger; it reads CSRCGKGFFMAQHKDRRSCGKC.

It belongs to the eukaryotic ribosomal protein eS31 family. As to quaternary structure, part of the 30S ribosomal subunit. Zn(2+) serves as cofactor.

The protein is Small ribosomal subunit protein eS31 of Cenarchaeum symbiosum (strain A).